Here is a 350-residue protein sequence, read N- to C-terminus: tRNA uridine(34) hydroxylase (350 aa).

One can recognise a Rhodanese domain in the interval 128–221; it reads EETDYVMIDT…YMKEYPNDQF (94 aa). Cysteine 181 acts as the Cysteine persulfide intermediate in catalysis.

Belongs to the TrhO family.

It catalyses the reaction uridine(34) in tRNA + AH2 + O2 = 5-hydroxyuridine(34) in tRNA + A + H2O. Catalyzes oxygen-dependent 5-hydroxyuridine (ho5U) modification at position 34 in tRNAs. This is tRNA uridine(34) hydroxylase from Bdellovibrio bacteriovorus (strain ATCC 15356 / DSM 50701 / NCIMB 9529 / HD100).